A 254-amino-acid polypeptide reads, in one-letter code: 5'-nucleotidase SurE (254 aa).

4 residues coordinate a divalent metal cation: D8, D9, S38, and N91.

Belongs to the SurE nucleotidase family. Requires a divalent metal cation as cofactor.

It is found in the cytoplasm. The catalysed reaction is a ribonucleoside 5'-phosphate + H2O = a ribonucleoside + phosphate. Nucleotidase that shows phosphatase activity on nucleoside 5'-monophosphates. This Anaeromyxobacter dehalogenans (strain 2CP-C) protein is 5'-nucleotidase SurE.